The primary structure comprises 97 residues: Co-chaperonin GroES (97 aa).

It belongs to the GroES chaperonin family. In terms of assembly, heptamer of 7 subunits arranged in a ring. Interacts with the chaperonin GroEL.

The protein resides in the cytoplasm. Functionally, together with the chaperonin GroEL, plays an essential role in assisting protein folding. The GroEL-GroES system forms a nano-cage that allows encapsulation of the non-native substrate proteins and provides a physical environment optimized to promote and accelerate protein folding. GroES binds to the apical surface of the GroEL ring, thereby capping the opening of the GroEL channel. This is Co-chaperonin GroES from Buchnera aphidicola subsp. Tetraneura caerulescens.